The chain runs to 546 residues: CTP synthase (546 aa).

The segment at 1–269 (MNPNTKIIFV…DAKLVELLNL (269 aa)) is amidoligase domain. Ser-16 serves as a coordination point for CTP. Residue Ser-16 coordinates UTP. ATP contacts are provided by residues 17-22 (SLGKGV) and Asp-74. Asp-74 and Glu-143 together coordinate Mg(2+). CTP-binding positions include 150–152 (DIE), 190–195 (KTKPTQ), and Lys-226. Residues 190–195 (KTKPTQ) and Lys-226 contribute to the UTP site. One can recognise a Glutamine amidotransferase type-1 domain in the interval 294 to 546 (TIAMVGKYVS…IHAAVEKSNK (253 aa)). Gly-356 contacts L-glutamine. Catalysis depends on Cys-383, which acts as the Nucleophile; for glutamine hydrolysis. Residues 384 to 387 (LGMQ), Glu-407, and Arg-474 each bind L-glutamine. Catalysis depends on residues His-519 and Glu-521.

It belongs to the CTP synthase family. As to quaternary structure, homotetramer.

The catalysed reaction is UTP + L-glutamine + ATP + H2O = CTP + L-glutamate + ADP + phosphate + 2 H(+). It catalyses the reaction L-glutamine + H2O = L-glutamate + NH4(+). It carries out the reaction UTP + NH4(+) + ATP = CTP + ADP + phosphate + 2 H(+). It participates in pyrimidine metabolism; CTP biosynthesis via de novo pathway; CTP from UDP: step 2/2. Allosterically activated by GTP, when glutamine is the substrate; GTP has no effect on the reaction when ammonia is the substrate. The allosteric effector GTP functions by stabilizing the protein conformation that binds the tetrahedral intermediate(s) formed during glutamine hydrolysis. Inhibited by the product CTP, via allosteric rather than competitive inhibition. In terms of biological role, catalyzes the ATP-dependent amination of UTP to CTP with either L-glutamine or ammonia as the source of nitrogen. Regulates intracellular CTP levels through interactions with the four ribonucleotide triphosphates. This chain is CTP synthase, found in Francisella philomiragia subsp. philomiragia (strain ATCC 25017 / CCUG 19701 / FSC 153 / O#319-036).